The following is a 478-amino-acid chain: Poly(A) RNA polymerase cid11 (478 aa).

Mg(2+) is bound by residues aspartate 106 and aspartate 108. In terms of domain architecture, PAP-associated spans 263–317; that stretch reads SLGRLLIDFFYYYGFSFNYLDSVVSVRSGTVLNKQEKGWAMEVNNSLCVEEPFNT. A disordered region spans residues 428–447; sequence QSYENKANRDSDFQGQTSLT.

It belongs to the DNA polymerase type-B-like family. Mg(2+) is required as a cofactor. Mn(2+) serves as cofactor.

It is found in the cytoplasm. The protein resides in the nucleus. The catalysed reaction is RNA(n) + ATP = RNA(n)-3'-adenine ribonucleotide + diphosphate. The sequence is that of Poly(A) RNA polymerase cid11 (cid11) from Schizosaccharomyces pombe (strain 972 / ATCC 24843) (Fission yeast).